The following is a 333-amino-acid chain: tRNA N6-adenosine threonylcarbamoyltransferase (333 aa).

Fe cation contacts are provided by histidine 108 and histidine 112. Residues 129 to 133 (LVSGG), aspartate 161, glutamate 178, and serine 258 contribute to the substrate site. Aspartate 286 is a binding site for Fe cation.

The protein belongs to the KAE1 / TsaD family. It depends on Fe(2+) as a cofactor.

The protein resides in the cytoplasm. It carries out the reaction L-threonylcarbamoyladenylate + adenosine(37) in tRNA = N(6)-L-threonylcarbamoyladenosine(37) in tRNA + AMP + H(+). Required for the formation of a threonylcarbamoyl group on adenosine at position 37 (t(6)A37) in tRNAs that read codons beginning with adenine. Is probably involved in the transfer of the threonylcarbamoyl moiety of threonylcarbamoyl-AMP (TC-AMP) to the N6 group of A37. The polypeptide is tRNA N6-adenosine threonylcarbamoyltransferase (Pyrobaculum islandicum (strain DSM 4184 / JCM 9189 / GEO3)).